The following is a 511-amino-acid chain: Small ribosomal subunit protein uS4m (511 aa).

An S4 RNA-binding domain is found at lysine 202–asparagine 272.

It belongs to the universal ribosomal protein uS4 family.

It localises to the mitochondrion. This is Small ribosomal subunit protein uS4m (RPS4) from Prototheca wickerhamii.